A 397-amino-acid chain; its full sequence is Growth-regulating factor 5 (397 aa).

Positions Pro16 to Arg51 constitute a QLQ domain. 2 short sequence motifs (bipartite nuclear localization signal) span residues Arg78–Arg96 and Arg114–Lys121. The WRC domain maps to Asp81–Gln125. Disordered regions lie at residues Cys108–Ala172, Leu197–Ser217, Pro288–His320, and Val340–Ser397. The span at His111–Arg120 shows a compositional bias: basic residues. Positions Thr128–Ala172 are enriched in low complexity. Over residues Pro288 to Lys298 the composition is skewed to basic and acidic residues.

Belongs to the GRF family. As to quaternary structure, interacts with GIF1. As to expression, strongly expressed in actively growing and developing tissues, such as roots, upper stems, and shoot tips containing the shoot apical meristem (SAM) and flower buds. Also expressed in mature flowers, but weakly expressed in mature stems and leaves.

Its subcellular location is the nucleus. Transcription activator that plays a role in the regulation of cell expansion in leaf and cotyledons tissues. Acts together with GIF1 for the development of appropriate leaf size and shape through the promotion and/or maintenance of cell proliferation activity in leaf primordia. The polypeptide is Growth-regulating factor 5 (GRF5) (Arabidopsis thaliana (Mouse-ear cress)).